We begin with the raw amino-acid sequence, 24 residues long: Grammistin Gs G (24 aa).

This sequence belongs to the grammistin family. Group 1 subfamily. In terms of assembly, exists as aggregates of 3-4 molecules. In terms of tissue distribution, expressed by the skin glands.

Its subcellular location is the secreted. Its function is as follows. Thanks to its abundant amphiphilic alpha-helices, it may integrate into membrane phospholipids, leading to lysis of the membrane. Its high hemolytic activity is inhibited by phospholipids, but not by cholesterol. Has antibacterial activity with a broad spectrum against various species of bacteria including both Gram-positive and Gram-negative groups. Also has high ichthyotoxic activity. The polypeptide is Grammistin Gs G (Grammistes sexlineatus (Goldenstriped soapfish)).